Reading from the N-terminus, the 298-residue chain is Protease HtpX homolog (298 aa).

The next 2 helical transmembrane spans lie at 14 to 34 (VVLL…AGYL) and 39 to 59 (YAMG…SMIF). H143 is a Zn(2+) binding site. Residue E144 is part of the active site. Position 147 (H147) interacts with Zn(2+). 2 consecutive transmembrane segments (helical) span residues 158-178 (IAVA…RMLW) and 197-217 (IITL…ASLI). Position 226 (E226) interacts with Zn(2+).

The protein belongs to the peptidase M48B family. Zn(2+) serves as cofactor.

The protein resides in the cell membrane. This Streptococcus pyogenes serotype M49 (strain NZ131) protein is Protease HtpX homolog.